Here is a 469-residue protein sequence, read N- to C-terminus: 3-isopropylmalate dehydratase large subunit (469 aa).

[4Fe-4S] cluster is bound by residues Cys347, Cys410, and Cys413.

Belongs to the aconitase/IPM isomerase family. LeuC type 1 subfamily. In terms of assembly, heterodimer of LeuC and LeuD. It depends on [4Fe-4S] cluster as a cofactor.

It carries out the reaction (2R,3S)-3-isopropylmalate = (2S)-2-isopropylmalate. Its pathway is amino-acid biosynthesis; L-leucine biosynthesis; L-leucine from 3-methyl-2-oxobutanoate: step 2/4. Its function is as follows. Catalyzes the isomerization between 2-isopropylmalate and 3-isopropylmalate, via the formation of 2-isopropylmaleate. The polypeptide is 3-isopropylmalate dehydratase large subunit (Burkholderia thailandensis (strain ATCC 700388 / DSM 13276 / CCUG 48851 / CIP 106301 / E264)).